Here is an 80-residue protein sequence, read N- to C-terminus: MIIPWQELDADTLNNLLEHFVLQEGTEYGEHDVSLADKVADVRTQLQQGLAVIVYSELHESVNIVPKATLDRAQVDDIPE.

The protein belongs to the UPF0270 family.

The polypeptide is UPF0270 protein AHA_0994 (Aeromonas hydrophila subsp. hydrophila (strain ATCC 7966 / DSM 30187 / BCRC 13018 / CCUG 14551 / JCM 1027 / KCTC 2358 / NCIMB 9240 / NCTC 8049)).